Reading from the N-terminus, the 284-residue chain is Four and a half LIM domains protein 5 (284 aa).

The C4-type zinc-finger motif lies at 8-32; that stretch reads CQYCMASLLGKKYVLKDDNPYCVSC. LIM zinc-binding domains are found at residues 39 to 100, 101 to 160, 161 to 220, and 223 to 283; these read NYCE…ECSS, KCFH…KEFA, HYCS…LYAK, and AACT…VDTD.

In terms of assembly, interacts with CREM (via the third LIM domain). Interacts (via second LIM domain) with SPAG8.

Its subcellular location is the nucleus. In terms of biological role, may be involved in the regulation of spermatogenesis. Stimulates CREM transcriptional activity in a phosphorylation-independent manner. This chain is Four and a half LIM domains protein 5 (FHL5), found in Bos taurus (Bovine).